The primary structure comprises 249 residues: MEPAKMAPIKNAPRDALVMAQILKDMGITEYEPRVINQMLEFAFRYVTTILDDAKIYSSHAKKPTVDADDVRLAIQCRADQSFTSPPPRDFLLDIARQKNQTPLPLIKPYAGPRLPPDRYCLTAPNYRLKSLVKKGPNQGRLVPRLSAVSSRPTTPPVAPPQAVSGPNKAATPVSVTSQRFAVQIPPSQSTPAKPAPAATAVQNVLINPSMIGPKNILITTSMVSSQNTATDSNPLKRKHDDDDDNDTM.

Met1 carries the post-translational modification N-acetylmethionine. A Phosphoserine modification is found at Ser147. The disordered stretch occupies residues 148–171 (AVSSRPTTPPVAPPQAVSGPNKAA). Position 172 is a phosphothreonine (Thr172). Position 175 is a phosphoserine (Ser175). The segment covering 224–234 (VSSQNTATDSN) has biased composition (polar residues). Residues 224 to 249 (VSSQNTATDSNPLKRKHDDDDDNDTM) are disordered.

The protein belongs to the TAF9 family. As to quaternary structure, binds TAF5 and TAF6. Component of TFIID and the TATA-binding protein-free TAF complex (TFTC). TFIID is composed of TATA binding protein (TBP) and a number of TBP-associated factors (TAFs). Binds N-terminal domain of p53/TP53 which is essential for transcription.

The protein resides in the nucleus. Essential for cell viability. TAF9 and TAF9B are involved in transcriptional activation as well as repression of distinct but overlapping sets of genes. May have a role in gene regulation associated with apoptosis. TAFs are components of the transcription factor IID (TFIID) complex, the TBP-free TAFII complex (TFTC), the PCAF histone acetylase complex and the STAGA transcription coactivator-HAT complex. TFIID or TFTC are essential for the regulation of RNA polymerase II-mediated transcription. The polypeptide is Transcription initiation factor TFIID subunit 9B (Taf9b) (Mus musculus (Mouse)).